A 315-amino-acid polypeptide reads, in one-letter code: Lipoyl synthase (315 aa).

Residues C62, C67, C73, C88, C92, C95, and S302 each contribute to the [4Fe-4S] cluster site. The Radical SAM core domain maps to 74-291 (FGKGTATFMI…ETEALAMGFK (218 aa)).

The protein belongs to the radical SAM superfamily. Lipoyl synthase family. [4Fe-4S] cluster is required as a cofactor.

Its subcellular location is the cytoplasm. The enzyme catalyses [[Fe-S] cluster scaffold protein carrying a second [4Fe-4S](2+) cluster] + N(6)-octanoyl-L-lysyl-[protein] + 2 oxidized [2Fe-2S]-[ferredoxin] + 2 S-adenosyl-L-methionine + 4 H(+) = [[Fe-S] cluster scaffold protein] + N(6)-[(R)-dihydrolipoyl]-L-lysyl-[protein] + 4 Fe(3+) + 2 hydrogen sulfide + 2 5'-deoxyadenosine + 2 L-methionine + 2 reduced [2Fe-2S]-[ferredoxin]. It functions in the pathway protein modification; protein lipoylation via endogenous pathway; protein N(6)-(lipoyl)lysine from octanoyl-[acyl-carrier-protein]: step 2/2. Its function is as follows. Catalyzes the radical-mediated insertion of two sulfur atoms into the C-6 and C-8 positions of the octanoyl moiety bound to the lipoyl domains of lipoate-dependent enzymes, thereby converting the octanoylated domains into lipoylated derivatives. In Aromatoleum aromaticum (strain DSM 19018 / LMG 30748 / EbN1) (Azoarcus sp. (strain EbN1)), this protein is Lipoyl synthase.